The chain runs to 776 residues: Protein translocase subunit SecA 2 (776 aa).

ATP contacts are provided by residues glutamine 80, 98–102 (GEGKT), and aspartate 486.

Belongs to the SecA family. As to quaternary structure, monomer and homodimer. Part of the essential Sec protein translocation apparatus which comprises SecA, SecYEG and auxiliary proteins SecDF. Other proteins may also be involved.

It localises to the cell membrane. Its subcellular location is the cytoplasm. It carries out the reaction ATP + H2O + cellular proteinSide 1 = ADP + phosphate + cellular proteinSide 2.. In terms of biological role, part of the Sec protein translocase complex. Interacts with the SecYEG preprotein conducting channel. Has a central role in coupling the hydrolysis of ATP to the transfer of proteins into and across the cell membrane, serving as an ATP-driven molecular motor driving the stepwise translocation of polypeptide chains across the membrane. This chain is Protein translocase subunit SecA 2, found in Listeria monocytogenes serotype 1/2a (strain 10403S).